A 421-amino-acid polypeptide reads, in one-letter code: Probable dual-specificity RNA methyltransferase RlmN (421 aa).

The interval 1-23 is disordered; the sequence is MTATTAESGRPDQPPTAEAGRPV. Catalysis depends on Glu-127, which acts as the Proton acceptor. The Radical SAM core domain maps to 133–372; the sequence is YPDRATVCVS…VTTVRDTRGR (240 aa). Cys-140 and Cys-378 are disulfide-bonded. Residues Cys-147, Cys-151, and Cys-154 each contribute to the [4Fe-4S] cluster site. S-adenosyl-L-methionine-binding positions include 202–203, Ser-236, 259–261, and Asn-335; these read GE and SLH. Cys-378 acts as the S-methylcysteine intermediate in catalysis. A disordered region spans residues 383–421; sequence AEPAGKPERTDRPEQVGSDRLVEFGAVGSTTPDGDRVLR. The segment covering 387-396 has biased composition (basic and acidic residues); sequence GKPERTDRPE.

It belongs to the radical SAM superfamily. RlmN family. Requires [4Fe-4S] cluster as cofactor.

It localises to the cytoplasm. It catalyses the reaction adenosine(2503) in 23S rRNA + 2 reduced [2Fe-2S]-[ferredoxin] + 2 S-adenosyl-L-methionine = 2-methyladenosine(2503) in 23S rRNA + 5'-deoxyadenosine + L-methionine + 2 oxidized [2Fe-2S]-[ferredoxin] + S-adenosyl-L-homocysteine. It carries out the reaction adenosine(37) in tRNA + 2 reduced [2Fe-2S]-[ferredoxin] + 2 S-adenosyl-L-methionine = 2-methyladenosine(37) in tRNA + 5'-deoxyadenosine + L-methionine + 2 oxidized [2Fe-2S]-[ferredoxin] + S-adenosyl-L-homocysteine. Functionally, specifically methylates position 2 of adenine 2503 in 23S rRNA and position 2 of adenine 37 in tRNAs. The polypeptide is Probable dual-specificity RNA methyltransferase RlmN (Frankia casuarinae (strain DSM 45818 / CECT 9043 / HFP020203 / CcI3)).